The chain runs to 639 residues: tRNA 5-methylaminomethyl-2-thiouridine biosynthesis bifunctional protein MnmC (639 aa).

The interval Met1–Ala228 is tRNA (mnm(5)s(2)U34)-methyltransferase. Positions Val254 to Gln639 are FAD-dependent cmnm(5)s(2)U34 oxidoreductase.

This sequence in the N-terminal section; belongs to the methyltransferase superfamily. tRNA (mnm(5)s(2)U34)-methyltransferase family. In the C-terminal section; belongs to the DAO family. The cofactor is FAD.

Its subcellular location is the cytoplasm. The catalysed reaction is 5-aminomethyl-2-thiouridine(34) in tRNA + S-adenosyl-L-methionine = 5-methylaminomethyl-2-thiouridine(34) in tRNA + S-adenosyl-L-homocysteine + H(+). In terms of biological role, catalyzes the last two steps in the biosynthesis of 5-methylaminomethyl-2-thiouridine (mnm(5)s(2)U) at the wobble position (U34) in tRNA. Catalyzes the FAD-dependent demodification of cmnm(5)s(2)U34 to nm(5)s(2)U34, followed by the transfer of a methyl group from S-adenosyl-L-methionine to nm(5)s(2)U34, to form mnm(5)s(2)U34. This chain is tRNA 5-methylaminomethyl-2-thiouridine biosynthesis bifunctional protein MnmC, found in Acidovorax sp. (strain JS42).